We begin with the raw amino-acid sequence, 566 residues long: CTP synthase (566 aa).

The tract at residues 1–282 is amidoligase domain; it reads MSIKRAQLGG…DAYIIDQLGL (282 aa). Ser23 lines the CTP pocket. Ser23 provides a ligand contact to UTP. ATP contacts are provided by residues 24–29 and Asp81; that span reads SLGKGL. 2 residues coordinate Mg(2+): Asp81 and Glu156. CTP is bound by residues 163 to 165, 203 to 208, and Lys239; these read DIE and KTKPTQ. Residues 203 to 208 and Lys239 each bind UTP; that span reads KTKPTQ. The 249-residue stretch at 308-556 folds into the Glutamine amidotransferase type-1 domain; sequence TIGLVGKYID…IGAALDRQKA (249 aa). L-glutamine is bound at residue Gly371. Cys398 serves as the catalytic Nucleophile; for glutamine hydrolysis. Residues 399–402, Glu422, and Arg482 each bind L-glutamine; that span reads LGLQ. Active-site residues include His529 and Glu531.

It belongs to the CTP synthase family. In terms of assembly, homotetramer.

The catalysed reaction is UTP + L-glutamine + ATP + H2O = CTP + L-glutamate + ADP + phosphate + 2 H(+). The enzyme catalyses L-glutamine + H2O = L-glutamate + NH4(+). It carries out the reaction UTP + NH4(+) + ATP = CTP + ADP + phosphate + 2 H(+). It functions in the pathway pyrimidine metabolism; CTP biosynthesis via de novo pathway; CTP from UDP: step 2/2. Its activity is regulated as follows. Allosterically activated by GTP, when glutamine is the substrate; GTP has no effect on the reaction when ammonia is the substrate. The allosteric effector GTP functions by stabilizing the protein conformation that binds the tetrahedral intermediate(s) formed during glutamine hydrolysis. Inhibited by the product CTP, via allosteric rather than competitive inhibition. In terms of biological role, catalyzes the ATP-dependent amination of UTP to CTP with either L-glutamine or ammonia as the source of nitrogen. Regulates intracellular CTP levels through interactions with the four ribonucleotide triphosphates. The protein is CTP synthase of Leifsonia xyli subsp. xyli (strain CTCB07).